We begin with the raw amino-acid sequence, 745 residues long: Phosphoribosylformylglycinamidine synthase subunit PurL (745 aa).

Residue histidine 47 is part of the active site. Tyrosine 50 and lysine 90 together coordinate ATP. Glutamate 92 serves as a coordination point for Mg(2+). Residues 93–96 (SHNH) and arginine 115 contribute to the substrate site. Catalysis depends on histidine 94, which acts as the Proton acceptor. Aspartate 116 is a binding site for Mg(2+). Substrate is bound at residue glutamine 240. Aspartate 268 is a Mg(2+) binding site. 312-314 (ESQ) is a substrate binding site. Positions 501 and 538 each coordinate ATP. Asparagine 539 provides a ligand contact to Mg(2+). A substrate-binding site is contributed by serine 541.

This sequence belongs to the FGAMS family. In terms of assembly, monomer. Part of the FGAM synthase complex composed of 1 PurL, 1 PurQ and 2 PurS subunits.

It localises to the cytoplasm. It carries out the reaction N(2)-formyl-N(1)-(5-phospho-beta-D-ribosyl)glycinamide + L-glutamine + ATP + H2O = 2-formamido-N(1)-(5-O-phospho-beta-D-ribosyl)acetamidine + L-glutamate + ADP + phosphate + H(+). It participates in purine metabolism; IMP biosynthesis via de novo pathway; 5-amino-1-(5-phospho-D-ribosyl)imidazole from N(2)-formyl-N(1)-(5-phospho-D-ribosyl)glycinamide: step 1/2. Its function is as follows. Part of the phosphoribosylformylglycinamidine synthase complex involved in the purines biosynthetic pathway. Catalyzes the ATP-dependent conversion of formylglycinamide ribonucleotide (FGAR) and glutamine to yield formylglycinamidine ribonucleotide (FGAM) and glutamate. The FGAM synthase complex is composed of three subunits. PurQ produces an ammonia molecule by converting glutamine to glutamate. PurL transfers the ammonia molecule to FGAR to form FGAM in an ATP-dependent manner. PurS interacts with PurQ and PurL and is thought to assist in the transfer of the ammonia molecule from PurQ to PurL. The polypeptide is Phosphoribosylformylglycinamidine synthase subunit PurL (Leptospira borgpetersenii serovar Hardjo-bovis (strain JB197)).